A 216-amino-acid chain; its full sequence is Uracil phosphoribosyltransferase (216 aa).

GTP is bound by residues R30, R39, 73 to 76 (ASKI), and K75. R83 contacts 5-phospho-alpha-D-ribose 1-diphosphate. Residue K100 coordinates GTP. Residue R108 coordinates 5-phospho-alpha-D-ribose 1-diphosphate. A GTP-binding site is contributed by R129. Residues D135 and 135-143 (DPMLATGGT) each bind 5-phospho-alpha-D-ribose 1-diphosphate. Residue Y199 participates in D-ribose 5-phosphate binding. Uracil-binding positions include I200 and 205-207 (GDF). D206 is a binding site for 5-phospho-alpha-D-ribose 1-diphosphate.

It belongs to the UPRTase family. It depends on Mg(2+) as a cofactor.

The enzyme catalyses UMP + diphosphate = 5-phospho-alpha-D-ribose 1-diphosphate + uracil. Its pathway is pyrimidine metabolism; UMP biosynthesis via salvage pathway; UMP from uracil: step 1/1. Allosterically activated by GTP. Functionally, catalyzes the conversion of uracil and 5-phospho-alpha-D-ribose 1-diphosphate (PRPP) to UMP and diphosphate. This is Uracil phosphoribosyltransferase (uprt) from Dictyostelium discoideum (Social amoeba).